Reading from the N-terminus, the 312-residue chain is Homoserine kinase (312 aa).

91 to 101 lines the ATP pocket; the sequence is PVASGLGSSAC.

Belongs to the GHMP kinase family. Homoserine kinase subfamily.

It is found in the cytoplasm. It catalyses the reaction L-homoserine + ATP = O-phospho-L-homoserine + ADP + H(+). It participates in amino-acid biosynthesis; L-threonine biosynthesis; L-threonine from L-aspartate: step 4/5. Its function is as follows. Catalyzes the ATP-dependent phosphorylation of L-homoserine to L-homoserine phosphate. The protein is Homoserine kinase of Blochmanniella pennsylvanica (strain BPEN).